The following is a 116-amino-acid chain: Large ribosomal subunit protein uL18 (116 aa).

This sequence belongs to the universal ribosomal protein uL18 family. In terms of assembly, part of the 50S ribosomal subunit; part of the 5S rRNA/L5/L18/L25 subcomplex. Contacts the 5S and 23S rRNAs.

Its function is as follows. This is one of the proteins that bind and probably mediate the attachment of the 5S RNA into the large ribosomal subunit, where it forms part of the central protuberance. The sequence is that of Large ribosomal subunit protein uL18 from Shewanella amazonensis (strain ATCC BAA-1098 / SB2B).